Consider the following 262-residue polypeptide: Hydroxyethylthiazole kinase (262 aa).

Met50 provides a ligand contact to substrate. 2 residues coordinate ATP: Arg125 and Thr171. Gly198 serves as a coordination point for substrate.

The protein belongs to the Thz kinase family. Mg(2+) serves as cofactor.

It catalyses the reaction 5-(2-hydroxyethyl)-4-methylthiazole + ATP = 4-methyl-5-(2-phosphooxyethyl)-thiazole + ADP + H(+). It participates in cofactor biosynthesis; thiamine diphosphate biosynthesis; 4-methyl-5-(2-phosphoethyl)-thiazole from 5-(2-hydroxyethyl)-4-methylthiazole: step 1/1. Catalyzes the phosphorylation of the hydroxyl group of 4-methyl-5-beta-hydroxyethylthiazole (THZ). The sequence is that of Hydroxyethylthiazole kinase from Escherichia coli (strain 55989 / EAEC).